A 667-amino-acid polypeptide reads, in one-letter code: DNA ligase (667 aa).

NAD(+) is bound by residues 32-36 and 80-81; these read DKDYD and SL. Lys-121 functions as the N6-AMP-lysine intermediate in the catalytic mechanism. The NAD(+) site is built by Arg-143, Glu-178, and Lys-314. 4 residues coordinate Zn(2+): Cys-407, Cys-410, Cys-423, and Cys-429. The BRCT domain maps to 587–667; that stretch reads IVESIFKDKT…EFEKMLGRES (81 aa).

This sequence belongs to the NAD-dependent DNA ligase family. LigA subfamily. The cofactor is Mg(2+). Mn(2+) is required as a cofactor.

The catalysed reaction is NAD(+) + (deoxyribonucleotide)n-3'-hydroxyl + 5'-phospho-(deoxyribonucleotide)m = (deoxyribonucleotide)n+m + AMP + beta-nicotinamide D-nucleotide.. In terms of biological role, DNA ligase that catalyzes the formation of phosphodiester linkages between 5'-phosphoryl and 3'-hydroxyl groups in double-stranded DNA using NAD as a coenzyme and as the energy source for the reaction. It is essential for DNA replication and repair of damaged DNA. This is DNA ligase from Clostridium botulinum (strain Eklund 17B / Type B).